Reading from the N-terminus, the 140-residue chain is Transcription antitermination protein NusB (140 aa).

The protein belongs to the NusB family.

Its function is as follows. Involved in transcription antitermination. Required for transcription of ribosomal RNA (rRNA) genes. Binds specifically to the boxA antiterminator sequence of the ribosomal RNA (rrn) operons. In Pseudoalteromonas atlantica (strain T6c / ATCC BAA-1087), this protein is Transcription antitermination protein NusB.